A 105-amino-acid chain; its full sequence is V-type ATP synthase subunit F (105 aa).

It belongs to the V-ATPase F subunit family.

Its function is as follows. Produces ATP from ADP in the presence of a proton gradient across the membrane. The polypeptide is V-type ATP synthase subunit F (Fusobacterium nucleatum subsp. nucleatum (strain ATCC 25586 / DSM 15643 / BCRC 10681 / CIP 101130 / JCM 8532 / KCTC 2640 / LMG 13131 / VPI 4355)).